Consider the following 95-residue polypeptide: MAFKFNAEVRSAQGKGASRRLRHNGQIPAIVYGGNEDAVSIVLNHDELNNAQAHDSFYSEVITLVINGKEVAVKVQAMQRHPFKPKLVHIDFKRA.

It belongs to the bacterial ribosomal protein bL25 family. In terms of assembly, part of the 50S ribosomal subunit; part of the 5S rRNA/L5/L18/L25 subcomplex. Contacts the 5S rRNA. Binds to the 5S rRNA independently of L5 and L18.

In terms of biological role, this is one of the proteins that binds to the 5S RNA in the ribosome where it forms part of the central protuberance. The protein is Large ribosomal subunit protein bL25 of Mannheimia succiniciproducens (strain KCTC 0769BP / MBEL55E).